We begin with the raw amino-acid sequence, 317 residues long: Nucleosome assembly protein 1;4 (317 aa).

A Nuclear export signal motif is present at residues 52–67 (LSPKVTKRVLFLKDIQ). Positions 214-219 (KKKTKK) match the Nuclear localization signal motif. A disordered region spans residues 297–317 (ALVDEDDSDDNDDDDNDEKSD). The segment covering 298–317 (LVDEDDSDDNDDDDNDEKSD) has biased composition (acidic residues).

Belongs to the nucleosome assembly protein (NAP) family. As to quaternary structure, can form homomeric and heteromeric protein complexes with NAP1;1, NAP1;2 and NAP1;3. Binds histone H2A. In terms of tissue distribution, expressed in the root segment covering the apical end of the differentiation zone, the elongation zone of the root and the mature pollen within the anthers of open flowers.

The protein resides in the nucleus. It is found in the cytoplasm. Its function is as follows. May modulate chromatin structure by regulation of nucleosome assembly/disassembly. The chain is Nucleosome assembly protein 1;4 (NAP1;4) from Arabidopsis thaliana (Mouse-ear cress).